The following is a 130-amino-acid chain: Holo-[acyl-carrier-protein] synthase (130 aa).

The Mg(2+) site is built by Asp-9 and Glu-58.

It belongs to the P-Pant transferase superfamily. AcpS family. It depends on Mg(2+) as a cofactor.

It localises to the cytoplasm. The catalysed reaction is apo-[ACP] + CoA = holo-[ACP] + adenosine 3',5'-bisphosphate + H(+). In terms of biological role, transfers the 4'-phosphopantetheine moiety from coenzyme A to a Ser of acyl-carrier-protein. The polypeptide is Holo-[acyl-carrier-protein] synthase (Mycobacterium marinum (strain ATCC BAA-535 / M)).